We begin with the raw amino-acid sequence, 612 residues long: Oligopeptide transport ATP-binding protein OppD (612 aa).

Residues leucine 5–leucine 255 form the ABC transporter 1 domain. Positions 43, 44, 45, 46, 47, 48, 49, 61, 96, 147, 158, 159, and 213 each coordinate ATP. Residues cysteine 286, cysteine 292, cysteine 299, and cysteine 317 each contribute to the [4Fe-4S] cluster site. An ABC transporter 2 domain is found at valine 350–leucine 600. 12 residues coordinate ATP: serine 396, glycine 397, serine 398, glycine 399, lysine 400, serine 401, threonine 402, glutamine 445, arginine 495, glutamate 499, glycine 503, and histidine 558.

This sequence belongs to the ABC transporter superfamily. As to quaternary structure, the complex is composed of an ATP-binding protein (OppD), two transmembrane proteins (OppB and OppC) and a solute-binding protein (OppA).

It is found in the cell inner membrane. It catalyses the reaction a [peptide](out) + ATP + H2O = a [peptide](in) + ADP + phosphate + H(+). Part of the ABC transporter complex OppABCD involved in the uptake of oligopeptides. Responsible for energy coupling to the transport system. The chain is Oligopeptide transport ATP-binding protein OppD from Mycobacterium bovis (strain ATCC BAA-935 / AF2122/97).